Here is a 355-residue protein sequence, read N- to C-terminus: Peptide chain release factor 1 (355 aa).

At Q233 the chain carries N5-methylglutamine.

It belongs to the prokaryotic/mitochondrial release factor family. Post-translationally, methylated by PrmC. Methylation increases the termination efficiency of RF1.

It localises to the cytoplasm. In terms of biological role, peptide chain release factor 1 directs the termination of translation in response to the peptide chain termination codons UAG and UAA. The protein is Peptide chain release factor 1 of Bacillus cytotoxicus (strain DSM 22905 / CIP 110041 / 391-98 / NVH 391-98).